Consider the following 360-residue polypeptide: Probable nuclear hormone receptor HR38 (360 aa).

A disordered region spans residues 1-21; the sequence is GSSSPGVAPADNTGPRAAPSS. Positions 23 to 98 form a DNA-binding region, nuclear receptor; it reads SQLCAVCGDT…VGMVKEVVRT (76 aa). 2 consecutive NR C4-type zinc fingers follow at residues 26–46 and 62–86; these read CAVCGDTAACQHYGVRTCEGC and CLAEKSCPVDKRRRNRCQFCWFQKC. One can recognise an NR LBD domain in the interval 122–357; sequence PPISLITALV…PLIENMFRAS (236 aa).

It belongs to the nuclear hormone receptor family. NR4 subfamily. In terms of assembly, forms a heterodimer with USP.

It localises to the nucleus. This chain is Probable nuclear hormone receptor HR38 (HR38), found in Bombyx mori (Silk moth).